The chain runs to 474 residues: Synaptotagmin 1 (474 aa).

2 disordered regions span residues 1–49 and 63–84; these read MPPN…DRQE and QRIA…ESTT. The Vesicular segment spans residues 1-107; sequence MPPNAKSETD…EVVTEVIAER (107 aa). Basic and acidic residues predominate over residues 30–49; it reads VDQKLEETHHSKFREVDRQE. Low complexity predominate over residues 69 to 84; sequence ESTTRSATTEAQESTT. A helical transmembrane segment spans residues 108 to 134; it reads TGLPTWGVVAIIILVFLVVFGIIFFCV. The Cytoplasmic portion of the chain corresponds to 135-474; the sequence is RRFLKKRRTK…ETDEILKNMK (340 aa). Residues 170-189 are disordered; the sequence is PDMEELTENAEEGDEEDKQS. Residues 171-187 are compositionally biased toward acidic residues; the sequence is DMEELTENAEEGDEEDK. The segment at 186–434 is phospholipid binding; it reads DKQSEQKLGR…PIGRCILGCM (249 aa). 2 consecutive C2 domains span residues 192–312 and 325–458; these read KLGR…EEWR and KLGD…AQWH. Residues Leu222, Asp223, Asp229, Asp282, Phe283, Asp284, Ser287, Lys288, Asp290, Asp356, Asp362, Asp416, and Asp418 each contribute to the Ca(2+) site.

Belongs to the synaptotagmin family. In terms of assembly, homodimer or homotrimer (Potential). Identified in a complex with Syn and nwk. Interacts with StnA and StnB via its second C2 domain. This interaction may mediate its retrieval from the plasma membrane, thereby facilitating the internalization of multiple synaptic vesicles from the plasma membrane. Requires Ca(2+) as cofactor.

The protein resides in the cytoplasmic vesicle. The protein localises to the secretory vesicle. It is found in the synaptic vesicle membrane. It localises to the synapse. Functionally, may have a regulatory role in the membrane interactions during trafficking of synaptic vesicles at the active zone of the synapse. It binds acidic phospholipids with a specificity that requires the presence of both an acidic head group and a diacyl backbone. The protein is Synaptotagmin 1 (Syt1) of Drosophila melanogaster (Fruit fly).